Here is a 226-residue protein sequence, read N- to C-terminus: Transmembrane gamma-carboxyglutamic acid protein 4 (226 aa).

The first 17 residues, 1–17 (MFPLLIVLSQLPRLTLA), serve as a signal peptide directing secretion. Positions 18–49 (VPHCIRSLKDSEHAPEEVFASKEAANIFMHRR) are excised as a propeptide. Residues 50 to 113 (LLNNRFDLEL…GSDVNKEKID (64 aa)) lie on the Extracellular side of the membrane. The region spanning 52-98 (NNRFDLELFTPGDLERECYEEFCSYEEAREILGDDENTIKFWQTYSI) is the Gla domain. A disulfide bridge links Cys69 with Cys74. Residue Glu72 is modified to 4-carboxyglutamate. A helical membrane pass occupies residues 114–134 (VMSLLTGLIVAGVFLVIFGLV). Residues 135–226 (GYYVCLTKCK…FKKSMSLPSH (92 aa)) are Cytoplasmic-facing. The residue at position 164 (Ser164) is a Phosphoserine. Positions 186-189 (LPSY) match the LPXY motif; mediates binding to WW domain-containing proteins motif. The PPXY motif; mediates binding to WW domain-containing proteins signature appears at 204–207 (PPPY).

Belongs to the commissureless family. Interacts (via cytoplasmic domain) with WW domain-containing proteins MAGI1, MAGI3, NEDD4, NEDD4L, WWTR1/TAZ and YAP1. In terms of processing, gamma-carboxyglutamate residues are formed by vitamin K dependent carboxylation. These residues are essential for the binding of calcium.

It localises to the endoplasmic reticulum-Golgi intermediate compartment membrane. Its subcellular location is the cell membrane. May control axon guidance across the CNS. Prevents the delivery of ROBO1 at the cell surface and down-regulates its expression. In Mus musculus (Mouse), this protein is Transmembrane gamma-carboxyglutamic acid protein 4 (Prrg4).